The primary structure comprises 317 residues: Ribosomal RNA small subunit methyltransferase H (317 aa).

Residues 39–41, D59, F83, D104, and Q111 contribute to the S-adenosyl-L-methionine site; that span reads GGH.

This sequence belongs to the methyltransferase superfamily. RsmH family.

The protein localises to the cytoplasm. It catalyses the reaction cytidine(1402) in 16S rRNA + S-adenosyl-L-methionine = N(4)-methylcytidine(1402) in 16S rRNA + S-adenosyl-L-homocysteine + H(+). Functionally, specifically methylates the N4 position of cytidine in position 1402 (C1402) of 16S rRNA. The polypeptide is Ribosomal RNA small subunit methyltransferase H (Paraburkholderia phytofirmans (strain DSM 17436 / LMG 22146 / PsJN) (Burkholderia phytofirmans)).